The following is a 535-amino-acid chain: Phosphoenolpyruvate carboxykinase (ATP) (535 aa).

R59, Y201, and K207 together coordinate substrate. ATP-binding positions include K207, H226, and 243 to 251 (GLSGTGKTT). Mn(2+) is bound by residues K207 and H226. D264 provides a ligand contact to Mn(2+). ATP is bound by residues E292, R328, 444–445 (RI), and T450. R328 is a binding site for substrate.

Belongs to the phosphoenolpyruvate carboxykinase (ATP) family. Mn(2+) is required as a cofactor.

It is found in the cytoplasm. The enzyme catalyses oxaloacetate + ATP = phosphoenolpyruvate + ADP + CO2. It participates in carbohydrate biosynthesis; gluconeogenesis. Involved in the gluconeogenesis. Catalyzes the conversion of oxaloacetate (OAA) to phosphoenolpyruvate (PEP) through direct phosphoryl transfer between the nucleoside triphosphate and OAA. The chain is Phosphoenolpyruvate carboxykinase (ATP) from Parabacteroides distasonis (strain ATCC 8503 / DSM 20701 / CIP 104284 / JCM 5825 / NCTC 11152).